The chain runs to 369 residues: Transmembrane protein 144 homolog A (369 aa).

10 consecutive transmembrane segments (helical) span residues 6 to 26 (VIGYIGSAAAIIGFGSNYVPV), 35 to 55 (LSYAFILSIGGLCVAFIAMMI), 63 to 83 (PIGILGGSLWAMANLLIIPII), 85 to 105 (LVGLGLGVLLWSSIGIVVGFF), 122 to 142 (DWMNWLGFVGIVISIFCFFFI), 221 to 241 (VAGISMSIICGVLLGVNMIPM), 256 to 276 (IIFSQFAGVFLFNAFTFMFYA), 288 to 308 (TVFPSFISGVMWGIANCGLMI), 318 to 338 (GYPISCSGPMIISSLWSVFYF), and 347 to 367 (LLILCGSFLFLISGIILLAFS).

It belongs to the TMEM144 family.

The protein localises to the membrane. This is Transmembrane protein 144 homolog A (tmem144A) from Dictyostelium discoideum (Social amoeba).